A 245-amino-acid polypeptide reads, in one-letter code: tRNA1(Val) (adenine(37)-N6)-methyltransferase (245 aa).

Belongs to the methyltransferase superfamily. tRNA (adenine-N(6)-)-methyltransferase family.

It localises to the cytoplasm. The enzyme catalyses adenosine(37) in tRNA1(Val) + S-adenosyl-L-methionine = N(6)-methyladenosine(37) in tRNA1(Val) + S-adenosyl-L-homocysteine + H(+). Its function is as follows. Specifically methylates the adenine in position 37 of tRNA(1)(Val) (anticodon cmo5UAC). The polypeptide is tRNA1(Val) (adenine(37)-N6)-methyltransferase (Erwinia tasmaniensis (strain DSM 17950 / CFBP 7177 / CIP 109463 / NCPPB 4357 / Et1/99)).